We begin with the raw amino-acid sequence, 280 residues long: Shikimate kinase (280 aa).

74-84 contacts ATP; it reads PGGSGLGSSSA.

Belongs to the GHMP kinase family. Archaeal shikimate kinase subfamily.

It is found in the cytoplasm. The enzyme catalyses shikimate + ATP = 3-phosphoshikimate + ADP + H(+). It participates in metabolic intermediate biosynthesis; chorismate biosynthesis; chorismate from D-erythrose 4-phosphate and phosphoenolpyruvate: step 5/7. This is Shikimate kinase (aroK) from Archaeoglobus fulgidus (strain ATCC 49558 / DSM 4304 / JCM 9628 / NBRC 100126 / VC-16).